A 184-amino-acid polypeptide reads, in one-letter code: Thymidine kinase (184 aa).

ATP is bound by residues 10–17, H53, and 83–86; these read GPMYSGKT and DEVQ. The active-site Proton acceptor is E84. Substrate is bound at residue H115. Zn(2+)-binding residues include C140 and C143. Substrate-binding positions include 161-164 and Y169; that span reads IDVG. 2 residues coordinate Zn(2+): C173 and C176.

This sequence belongs to the thymidine kinase family. In terms of assembly, homotetramer.

The protein localises to the cytoplasm. The enzyme catalyses thymidine + ATP = dTMP + ADP + H(+). This Thermotoga maritima (strain ATCC 43589 / DSM 3109 / JCM 10099 / NBRC 100826 / MSB8) protein is Thymidine kinase (tdk).